Here is a 152-residue protein sequence, read N- to C-terminus: D-erythrulose-4-phosphate isomerase 2 (152 aa).

Residue Cys-70 is the Proton acceptor of the active site.

Belongs to the LacAB/RpiB family.

It catalyses the reaction D-erythrulose 4-phosphate = D-erythrose 4-phosphate. It functions in the pathway carbohydrate metabolism; erythritol degradation. The protein operates within carbohydrate metabolism; D-threitol degradation. It participates in carbohydrate metabolism; L-threitol degradation. Catalyzes the isomerization of D-erythrulose-4P to D-erythrose-4P. Involved in the degradation pathways of L-threitol, D-threitol and erythritol, that allow M.smegmatis to grow on these compounds as the sole carbon source. This Mycolicibacterium smegmatis (strain ATCC 700084 / mc(2)155) (Mycobacterium smegmatis) protein is D-erythrulose-4-phosphate isomerase 2.